The chain runs to 456 residues: Bifunctional protein GlmU (456 aa).

Residues 1–227 (MKLRVVILAA…AQEVEGANNR (227 aa)) are pyrophosphorylase. Residues 8 to 11 (LAAG), Lys22, Gln73, 78 to 79 (GT), 100 to 102 (YGD), Gly137, Glu152, Asn167, and Asn225 contribute to the UDP-N-acetyl-alpha-D-glucosamine site. Asp102 lines the Mg(2+) pocket. Asn225 provides a ligand contact to Mg(2+). Residues 228–248 (QQLASLERALQQRQAEELMTQ) form a linker region. An N-acetyltransferase region spans residues 249-456 (GVTLIDPARF…WQRPQSKKGT (208 aa)). Positions 331 and 349 each coordinate UDP-N-acetyl-alpha-D-glucosamine. The Proton acceptor role is filled by His361. Positions 364 and 375 each coordinate UDP-N-acetyl-alpha-D-glucosamine. Residues Ala378, 384 to 385 (NY), Ser403, Ala421, and Arg438 each bind acetyl-CoA.

This sequence in the N-terminal section; belongs to the N-acetylglucosamine-1-phosphate uridyltransferase family. In the C-terminal section; belongs to the transferase hexapeptide repeat family. In terms of assembly, homotrimer. Mg(2+) serves as cofactor.

The protein resides in the cytoplasm. It carries out the reaction alpha-D-glucosamine 1-phosphate + acetyl-CoA = N-acetyl-alpha-D-glucosamine 1-phosphate + CoA + H(+). It catalyses the reaction N-acetyl-alpha-D-glucosamine 1-phosphate + UTP + H(+) = UDP-N-acetyl-alpha-D-glucosamine + diphosphate. The protein operates within nucleotide-sugar biosynthesis; UDP-N-acetyl-alpha-D-glucosamine biosynthesis; N-acetyl-alpha-D-glucosamine 1-phosphate from alpha-D-glucosamine 6-phosphate (route II): step 2/2. It participates in nucleotide-sugar biosynthesis; UDP-N-acetyl-alpha-D-glucosamine biosynthesis; UDP-N-acetyl-alpha-D-glucosamine from N-acetyl-alpha-D-glucosamine 1-phosphate: step 1/1. It functions in the pathway bacterial outer membrane biogenesis; LPS lipid A biosynthesis. In terms of biological role, catalyzes the last two sequential reactions in the de novo biosynthetic pathway for UDP-N-acetylglucosamine (UDP-GlcNAc). The C-terminal domain catalyzes the transfer of acetyl group from acetyl coenzyme A to glucosamine-1-phosphate (GlcN-1-P) to produce N-acetylglucosamine-1-phosphate (GlcNAc-1-P), which is converted into UDP-GlcNAc by the transfer of uridine 5-monophosphate (from uridine 5-triphosphate), a reaction catalyzed by the N-terminal domain. The protein is Bifunctional protein GlmU of Idiomarina loihiensis (strain ATCC BAA-735 / DSM 15497 / L2-TR).